A 320-amino-acid chain; its full sequence is Aspartate carbamoyltransferase catalytic subunit (320 aa).

The carbamoyl phosphate site is built by R70 and T71. K98 is an L-aspartate binding site. The carbamoyl phosphate site is built by R120, H149, and Q152. The L-aspartate site is built by R182 and R237. The carbamoyl phosphate site is built by G278 and P279.

This sequence belongs to the aspartate/ornithine carbamoyltransferase superfamily. ATCase family. Heterododecamer (2C3:3R2) of six catalytic PyrB chains organized as two trimers (C3), and six regulatory PyrI chains organized as three dimers (R2).

It carries out the reaction carbamoyl phosphate + L-aspartate = N-carbamoyl-L-aspartate + phosphate + H(+). It participates in pyrimidine metabolism; UMP biosynthesis via de novo pathway; (S)-dihydroorotate from bicarbonate: step 2/3. In terms of biological role, catalyzes the condensation of carbamoyl phosphate and aspartate to form carbamoyl aspartate and inorganic phosphate, the committed step in the de novo pyrimidine nucleotide biosynthesis pathway. The chain is Aspartate carbamoyltransferase catalytic subunit from Vesicomyosocius okutanii subsp. Calyptogena okutanii (strain HA).